We begin with the raw amino-acid sequence, 202 residues long: Small ribosomal subunit protein uS4 (202 aa).

Positions 1–13 are enriched in basic residues; it reads MSRYRGPRLRVTR. The tract at residues 1–42 is disordered; sequence MSRYRGPRLRVTRRLGELPGLTRKASKKSNPPGQHGQARRKR. The region spanning 90-152 is the S4 RNA-binding domain; sequence NRLDNVCFRL…KASKKLVEGN (63 aa).

It belongs to the universal ribosomal protein uS4 family. As to quaternary structure, part of the 30S ribosomal subunit. Contacts protein S5. The interaction surface between S4 and S5 is involved in control of translational fidelity.

In terms of biological role, one of the primary rRNA binding proteins, it binds directly to 16S rRNA where it nucleates assembly of the body of the 30S subunit. Its function is as follows. With S5 and S12 plays an important role in translational accuracy. The chain is Small ribosomal subunit protein uS4 from Prochlorococcus marinus (strain MIT 9515).